Consider the following 507-residue polypeptide: Dihydrolipoyl dehydrogenase 1, mitochondrial (507 aa).

The transit peptide at 1 to 36 (MAMASLARRKAYFLTRNLSNSPTDALRFSFSLSRGF) directs the protein to the mitochondrion. FAD is bound by residues 73–82 (EKRGALGGTC), Lys91, Gly155, and 184–186 (TGS). An intrachain disulfide couples Cys82 to Cys87. NAD(+)-binding positions include 221 to 228 (GAGYIGLE), Glu244, Val278, and Gly313. FAD is bound by residues Asp354 and 360–363 (MLAH). The active-site Proton acceptor is His486.

Belongs to the class-I pyridine nucleotide-disulfide oxidoreductase family. Homodimer. Part of both the glycine cleavage system composed of four proteins: P, T, L and H and of the pyruvate dehydrogenase complex containing multiple copies of three enzymatic components: pyruvate dehydrogenase (E1), dihydrolipoamide acetyltransferase (E2) and lipoamide dehydrogenase (E3). The cofactor is FAD. S-nytrosylated at unknown positions. In terms of tissue distribution, preferentially expressed in leaves, flowers and siliques and at a lower level in roots and stems.

The protein resides in the mitochondrion matrix. It carries out the reaction N(6)-[(R)-dihydrolipoyl]-L-lysyl-[protein] + NAD(+) = N(6)-[(R)-lipoyl]-L-lysyl-[protein] + NADH + H(+). Lipoamide dehydrogenase is a component of the glycine decarboxylase (GDC) or glycine cleavage system as well as of the alpha-ketoacid dehydrogenase complexes. LPD1 is probably the protein most often associated with the glycine decarboxylase complex while LPD2 is probably incorporated into alpha-ketoacid dehydrogenase complexes. The protein is Dihydrolipoyl dehydrogenase 1, mitochondrial (LPD1) of Arabidopsis thaliana (Mouse-ear cress).